The chain runs to 941 residues: UvrABC system protein A (941 aa).

G31–S38 is an ATP binding site. The C4-type zinc-finger motif lies at C253–C280. ABC transporter domains are found at residues W310 to L587 and A607 to K937. G640 to S647 contacts ATP. The segment at C740 to C766 adopts a C4-type zinc-finger fold.

It belongs to the ABC transporter superfamily. UvrA family. In terms of assembly, forms a heterotetramer with UvrB during the search for lesions.

It localises to the cytoplasm. Its function is as follows. The UvrABC repair system catalyzes the recognition and processing of DNA lesions. UvrA is an ATPase and a DNA-binding protein. A damage recognition complex composed of 2 UvrA and 2 UvrB subunits scans DNA for abnormalities. When the presence of a lesion has been verified by UvrB, the UvrA molecules dissociate. This chain is UvrABC system protein A, found in Salmonella typhi.